Consider the following 360-residue polypeptide: Magnesium-protoporphyrin IX monomethyl ester [oxidative] cyclase (360 aa).

Residues 1–20 are disordered; the sequence is MVPPTAIAEASRSGGEPAIK.

Belongs to the AcsF family. The cofactor is Fe cation.

It carries out the reaction Mg-protoporphyrin IX 13-monomethyl ester + 3 NADPH + 3 O2 + 2 H(+) = 3,8-divinyl protochlorophyllide a + 3 NADP(+) + 5 H2O. It functions in the pathway porphyrin-containing compound metabolism; chlorophyll biosynthesis (light-independent). Functionally, catalyzes the formation of the isocyclic ring in chlorophyll biosynthesis. Mediates the cyclase reaction, which results in the formation of divinylprotochlorophyllide (Pchlide) characteristic of all chlorophylls from magnesium-protoporphyrin IX 13-monomethyl ester (MgPMME). The chain is Magnesium-protoporphyrin IX monomethyl ester [oxidative] cyclase from Synechococcus sp. (strain RCC307).